Here is a 126-residue protein sequence, read N- to C-terminus: Small ribosomal subunit protein uS13 (126 aa).

The disordered stretch occupies residues Gly-95–Lys-126.

The protein belongs to the universal ribosomal protein uS13 family. As to quaternary structure, part of the 30S ribosomal subunit. Forms a loose heterodimer with protein S19. Forms two bridges to the 50S subunit in the 70S ribosome.

Functionally, located at the top of the head of the 30S subunit, it contacts several helices of the 16S rRNA. In the 70S ribosome it contacts the 23S rRNA (bridge B1a) and protein L5 of the 50S subunit (bridge B1b), connecting the 2 subunits; these bridges are implicated in subunit movement. Contacts the tRNAs in the A and P-sites. The chain is Small ribosomal subunit protein uS13 (rpsM) from Thermus thermophilus (strain ATCC BAA-163 / DSM 7039 / HB27).